The following is a 221-amino-acid chain: MDTLDELLPREKMLRSGIASLSDVELLALFLRTGTPGKDVMTLAKEILQHFGSLYGLLSADFAQFRGVNGIGLAKFAQLKGIAELARRYYSVRMNEESALLSPEMTREFLQSQLTGEEREIFLVIFLDAQHRVLQHSRLFSGTLNHVEVHPREIVREAIKLNASAVILAHNHPSGCAEPSKADKLITERVIKCCQFMDIRVLDHLIIGRGEYVSFAERGWI.

The MPN domain maps to 99–221; sequence ALLSPEMTRE…YVSFAERGWI (123 aa). His170, His172, and Asp183 together coordinate Zn(2+). The JAMM motif signature appears at 170 to 183; that stretch reads HNHPSGCAEPSKAD.

Belongs to the UPF0758 family. YicR subfamily.

The chain is UPF0758 protein YicR from Salmonella agona (strain SL483).